The sequence spans 240 residues: Lipoprotein signal peptidase (240 aa).

4 helical membrane-spanning segments follow: residues 38–58, 73–93, 98–118, and 120–140; these read LIWK…TSFL, LIPG…FGTL, PSLV…VLLF, and SNYL…SNII. Active-site residues include Asp162 and Asp179. A helical transmembrane segment spans residues 177 to 197; it reads FPDTFVIIGMIFVGIQIIISF.

This sequence belongs to the peptidase A8 family.

Its subcellular location is the cell membrane. The enzyme catalyses Release of signal peptides from bacterial membrane prolipoproteins. Hydrolyzes -Xaa-Yaa-Zaa-|-(S,diacylglyceryl)Cys-, in which Xaa is hydrophobic (preferably Leu), and Yaa (Ala or Ser) and Zaa (Gly or Ala) have small, neutral side chains.. The protein operates within protein modification; lipoprotein biosynthesis (signal peptide cleavage). In terms of biological role, this protein specifically catalyzes the removal of signal peptides from prolipoproteins. The protein is Lipoprotein signal peptidase of Malacoplasma penetrans (strain HF-2) (Mycoplasma penetrans).